Reading from the N-terminus, the 723-residue chain is ESX-1 secretion-associated protein EspK (723 aa).

Disordered stretches follow at residues 175 to 360 (DLLQ…TPAA) and 393 to 451 (SGAG…GTPV). Positions 200–209 (TPGTPITPGT) are enriched in low complexity. The span at 210–229 (PITPIPGAPVTPITPTPGTP) shows a compositional bias: pro residues. The span at 230 to 249 (VTPVTPGKPVTPVTPVKPGT) shows a compositional bias: low complexity. Pro residues-rich tracts occupy residues 250–265 (PGEP…PVAP) and 274–308 (PVTP…PSGP). Low complexity-rich tracts occupy residues 309-319 (ATPGTPGGEPA), 393-404 (SGAGSHAATGRA), and 412-426 (AAAP…RTAP). Residues 432-444 (STDHIDKPDRSES) show a composition bias toward basic and acidic residues.

The protein localises to the cytoplasm. Functionally, may act as a chaperone that facilitates EspB secretion through an interaction with EccCb1. The polypeptide is ESX-1 secretion-associated protein EspK (Mycobacterium tuberculosis (strain CDC 1551 / Oshkosh)).